The primary structure comprises 257 residues: Ribonuclease HII (257 aa).

Residues 72 to 257 enclose the RNase H type-2 domain; it reads TYIAGIDEVG…FAPIKDMIQK (186 aa). D78, E79, and D170 together coordinate a divalent metal cation.

This sequence belongs to the RNase HII family. Mn(2+) serves as cofactor. Requires Mg(2+) as cofactor.

It is found in the cytoplasm. The enzyme catalyses Endonucleolytic cleavage to 5'-phosphomonoester.. In terms of biological role, endonuclease that specifically degrades the RNA of RNA-DNA hybrids. This chain is Ribonuclease HII, found in Bacillus cereus (strain G9842).